The chain runs to 196 residues: MNEAVSPGALSTLFTDARTHNGWREPPVSDETLREIYAQMKWGPTSANCSPARIVFIRTAEGKERLRPALSSGNLQKTLTAPVTAIVAWDSEFYERLPQLFPHGDARSWFTSSPQLAEETAFRNSSMQAAYLIVACRALGLDTGPMSGFDRQYVDDAFFAGSTLKSNLLINIGYGDSSKLFARLPRLSFEEACGLL.

The protein belongs to the nitroreductase family. HadB/RutE subfamily. It depends on FMN as a cofactor.

It carries out the reaction 3-hydroxypropanoate + NADP(+) = 3-oxopropanoate + NADPH + H(+). Its function is as follows. May reduce toxic product malonic semialdehyde to 3-hydroxypropionic acid, which is excreted. This chain is Probable malonic semialdehyde reductase RutE, found in Escherichia coli O81 (strain ED1a).